Reading from the N-terminus, the 309-residue chain is Aspartate carbamoyltransferase catalytic subunit (309 aa).

Positions 55 and 56 each coordinate carbamoyl phosphate. Lys-85 serves as a coordination point for L-aspartate. Positions 106, 135, and 138 each coordinate carbamoyl phosphate. Positions 168 and 230 each coordinate L-aspartate. Residues Leu-268 and Pro-269 each contribute to the carbamoyl phosphate site.

Belongs to the aspartate/ornithine carbamoyltransferase superfamily. ATCase family. As to quaternary structure, heterododecamer (2C3:3R2) of six catalytic PyrB chains organized as two trimers (C3), and six regulatory PyrI chains organized as three dimers (R2).

The enzyme catalyses carbamoyl phosphate + L-aspartate = N-carbamoyl-L-aspartate + phosphate + H(+). It functions in the pathway pyrimidine metabolism; UMP biosynthesis via de novo pathway; (S)-dihydroorotate from bicarbonate: step 2/3. Catalyzes the condensation of carbamoyl phosphate and aspartate to form carbamoyl aspartate and inorganic phosphate, the committed step in the de novo pyrimidine nucleotide biosynthesis pathway. The protein is Aspartate carbamoyltransferase catalytic subunit of Aliivibrio fischeri (strain MJ11) (Vibrio fischeri).